Here is a 670-residue protein sequence, read N- to C-terminus: Methionine--tRNA ligase (670 aa).

Positions 14–24 (PYANGHLHLGH) match the 'HIGH' region motif. Residues cysteine 145, cysteine 148, cysteine 158, and cysteine 161 each coordinate Zn(2+). A 'KMSKS' region motif is present at residues 330–334 (KMSKS). Residue lysine 333 participates in ATP binding. One can recognise a tRNA-binding domain in the interval 570–670 (DFAKVDLRIA…AGAFPGMKVK (101 aa)).

The protein belongs to the class-I aminoacyl-tRNA synthetase family. MetG type 1 subfamily. In terms of assembly, homodimer. Zn(2+) is required as a cofactor.

The protein localises to the cytoplasm. It catalyses the reaction tRNA(Met) + L-methionine + ATP = L-methionyl-tRNA(Met) + AMP + diphosphate. Functionally, is required not only for elongation of protein synthesis but also for the initiation of all mRNA translation through initiator tRNA(fMet) aminoacylation. This chain is Methionine--tRNA ligase, found in Legionella pneumophila (strain Corby).